The chain runs to 152 residues: UPF0178 protein YaiI (152 aa).

This sequence belongs to the UPF0178 family.

This chain is UPF0178 protein YaiI, found in Shigella flexneri.